A 195-amino-acid polypeptide reads, in one-letter code: HTH-type transcriptional regulator BetI (195 aa).

Positions 8-68 (EIRRAQLIDA…ATMRHVLRDL (61 aa)) constitute an HTH tetR-type domain. Residues 31-50 (TLASVAQRASISTGIVSHYF) constitute a DNA-binding region (H-T-H motif).

It functions in the pathway amine and polyamine biosynthesis; betaine biosynthesis via choline pathway [regulation]. In terms of biological role, repressor involved in the biosynthesis of the osmoprotectant glycine betaine. It represses transcription of the choline transporter BetT and the genes of BetAB involved in the synthesis of glycine betaine. This Paraburkholderia xenovorans (strain LB400) protein is HTH-type transcriptional regulator BetI.